Reading from the N-terminus, the 1080-residue chain is Kinesin-like protein KIN-14E (1080 aa).

The tract at residues 1 to 35 (MDFSWTTGWEKAAADDDEAESAPAPAPPAPSPQEA) is disordered. The stretch at 247 to 355 (QTRTSKLISK…KQEQTLLSLE (109 aa)) forms a coiled coil. One can recognise a Kinesin motor domain in the interval 407–729 (NIRVFCRCRP…LNFASRVRRI (323 aa)). 490–497 (GQTGTGKT) contacts ATP. Residues 736–893 (KQVDTAELQK…EHHRSVAESK (158 aa)) adopt a coiled-coil conformation. Positions 960–970 (AMSEKEQHILR) are enriched in basic and acidic residues. A disordered region spans residues 960–1080 (AMSEKEQHIL…AVNKTRGWVR (121 aa)). Residues 971–985 (SSDSMNKKVTNNSSI) show a composition bias toward polar residues. Residues 1047-1059 (TATSKTAAATHKT) show a composition bias toward low complexity.

It belongs to the TRAFAC class myosin-kinesin ATPase superfamily. Kinesin family. KIN-14 subfamily.

In Oryza sativa subsp. japonica (Rice), this protein is Kinesin-like protein KIN-14E.